The following is a 335-amino-acid chain: Vitamin B12 import system permease protein BtuC (335 aa).

Transmembrane regions (helical) follow at residues 25 to 45 (LVVILLLSLLISLCAGDIWLW), 67 to 87 (LAVLMVGASLAVSGAVMQALF), 95 to 114 (GLLGVANGAGVALVMAVLLG), 118 to 140 (LPIWFLSACAIAGALLMTMLLLG), 153 to 173 (LLVGVALGIVCSAIMTWAVYF), 200 to 220 (LVLALLPIVLWLCCQGHVLNF), 243 to 263 (VLAIGLLVGVSVALAGVISFI), 286 to 306 (CALAGGGILLLADIVARIALF), and 308 to 328 (AELPIGVVTATLGAPLFIWLL).

The protein belongs to the binding-protein-dependent transport system permease family. FecCD subfamily. As to quaternary structure, the complex is composed of two ATP-binding proteins (BtuD), two transmembrane proteins (BtuC) and a solute-binding protein (BtuF).

The protein localises to the cell inner membrane. In terms of biological role, part of the ABC transporter complex BtuCDF involved in vitamin B12 import. Involved in the translocation of the substrate across the membrane. In Yersinia enterocolitica serotype O:8 / biotype 1B (strain NCTC 13174 / 8081), this protein is Vitamin B12 import system permease protein BtuC.